The primary structure comprises 132 residues: Bombinin-like peptides (132 aa).

The signal sequence occupies residues 1 to 18 (MNFKYIIAVSFLIASAYA). A propeptide spanning residues 19 to 42 (RSEEYDIQSLSQRDVLEEESLRKI) is cleaved from the precursor. Residue Phe-68 is modified to Phenylalanine amide. The propeptide occupies 72–112 (TAEDHEVMKRLEAAMRDLDSLDYPEEASERETRGFNQEEKE). At Leu-131 the chain carries Leucine amide.

Belongs to the bombinin family. In terms of tissue distribution, expressed by the skin glands.

The protein localises to the secreted. Functionally, has antimicrobial activity against Gram-negative bacterium E.coli (MIC=26.3 uM), Gram-positive bacterium S.aureus (MIC=26.3 uM) and yeast C.albicans (MIC=52.5 uM). Has moderate hemolytic activity towards human erythrocytes at a concentration of 52.2 uM. Its function is as follows. Has no antimicrobial activity at concentrations up to 161 uM. Has moderate hemolytic activity towards human erythrocytes at a concentration of 40.3 uM. The polypeptide is Bombinin-like peptides (Bombina orientalis (Oriental fire-bellied toad)).